Reading from the N-terminus, the 386-residue chain is Phosphoglycerate kinase (386 aa).

Substrate-binding positions include 21–23 (DLN), Arg-36, 59–62 (HLGR), Arg-112, and Arg-145. ATP-binding positions include Lys-196, Glu-313, and 339–342 (GGDT).

Belongs to the phosphoglycerate kinase family. In terms of assembly, monomer.

The protein resides in the cytoplasm. The catalysed reaction is (2R)-3-phosphoglycerate + ATP = (2R)-3-phospho-glyceroyl phosphate + ADP. It participates in carbohydrate degradation; glycolysis; pyruvate from D-glyceraldehyde 3-phosphate: step 2/5. This Haemophilus influenzae (strain PittEE) protein is Phosphoglycerate kinase.